The sequence spans 134 residues: Spermadhesin-1 (134 aa).

The first 20 residues, 1-20 (MKLSSVIPWALLLSTATVDS), serve as a signal peptide directing secretion. Cystine bridges form between Cys-30/Cys-51 and Cys-74/Cys-95. Residues 30–131 (CGGILKEESG…SFYEVLYFQD (102 aa)) enclose the CUB domain.

It belongs to the spermadhesin family. Seminal vesicle tissue, ampulla and weakly in tissue of epididymis.

The protein resides in the secreted. In terms of biological role, stimulates cell division and progesterone secretion of bovine granulosa cells in vitro in a potent and dose dependent manner. This protein appears to be a potent growth factor with effects on ovarian granulosa cells. The protein is Spermadhesin-1 (SPADH1) of Bos taurus (Bovine).